A 355-amino-acid polypeptide reads, in one-letter code: Myosin-binding protein H-like (355 aa).

2 stretches are compositionally biased toward polar residues: residues 1-16 (META…SQRQ) and 31-41 (TSHQQEAGSPS). Residues 1–41 (METATTLEIASCSQRQVEAAADPADAKGPRTSHQQEAGSPS) form a disordered region. S39 bears the Phosphoserine mark. Positions 46–140 (PSIEEHPKIW…GGLQATATIN (95 aa)) constitute an Ig-like C2-type 1 domain. Residues 149-244 (PPQSIKLVDV…TADLAHIQKA (96 aa)) enclose the Fibronectin type-III domain. Positions 262–346 (PKFTQPLADC…INALGEASVD (85 aa)) constitute an Ig-like C2-type 2 domain. C283 and C334 are oxidised to a cystine. An Omega-N-methylarginine modification is found at R322.

The protein belongs to the immunoglobulin superfamily. MyBP family. As to expression, expressed in the atria as well as in discrete puncta throughout the right ventricular wall and septum.

The protein resides in the cytoplasm. It is found in the myofibril. The protein localises to the sarcomere. Functionally, myosin-binding protein which plays a role in cardiac function. Seems to regulate conduction in the atria and ventricular conduction systems. This chain is Myosin-binding protein H-like, found in Mus musculus (Mouse).